Reading from the N-terminus, the 234-residue chain is BTB/POZ domain-containing protein KCTD5 (234 aa).

N-acetylalanine is present on alanine 2. Positions 44 to 146 constitute a BTB domain; that stretch reads KWVRLNVGGT…LVKDKIRERD (103 aa). The tract at residues 211-234 is disordered; that stretch reads NSPHGPASEPSEKAKILQERGSRM. The span at 220-234 shows a compositional bias: basic and acidic residues; that stretch reads PSEKAKILQERGSRM.

Homopentamer. Interacts (via C-terminus) with GRASP55/GORASP2. Interacts with CUL3 and with ubiquitinated proteins. Interacts with CRY1.

The protein localises to the cytoplasm. It localises to the cytosol. The protein resides in the nucleus. Functionally, its interaction with CUL3 suggests that it may act as a substrate adapter in some E3 ligase complex. Does not affect the function of Kv channel Kv2.1/KCNB1, Kv1.2/KCNA2, Kv4.2/KCND2 and Kv3.4/KCNC4. This chain is BTB/POZ domain-containing protein KCTD5 (KCTD5), found in Bos taurus (Bovine).